We begin with the raw amino-acid sequence, 826 residues long: Homeobox-leucine zipper protein HDG5 (826 aa).

2 disordered regions span residues 1 to 34 (MLTMGEGNVMTSNNRFASPPQQPSSSSPGTIQNP) and 69 to 119 (EMME…HRHT). Residues 23-34 (PSSSSPGTIQNP) are compositionally biased toward low complexity. Basic and acidic residues predominate over residues 88–105 (EDPKFGNESDVNELHDDE). Residues 110 to 119 (AKKKRYHRHT) are compositionally biased toward basic residues. The homeobox DNA-binding region spans 111 to 170 (KKKRYHRHTNRQIQEMEALFKENPHPDDKQRKRLSAELGLKPRQVKFWFQNRRTQMKAQQ). A coiled-coil region spans residues 165-189 (QMKAQQDRNENVMLRAENDNLKSEN). The START domain occupies 314–558 (ADEEKVIAME…LQRQCERIAS (245 aa)).

It belongs to the HD-ZIP homeobox family. Class IV subfamily. In terms of tissue distribution, expressed in shoot apical meristem (SAM) with higher levels in L1 cells and the epidermal layer of young leaves. Expressed in the L1 of apical inflorescence meristems, early flower primordia, carpel and stamen filament epidermis, ovule primordia, nucellus and chalaze.

Its subcellular location is the nucleus. Its function is as follows. Probable transcription factor. Involved, together with PDF2, in the regulation of flower organs development by promoting the expression of APETALA 3 (AP3) in the epidermis and internal cell layers of developing flowers. The chain is Homeobox-leucine zipper protein HDG5 from Arabidopsis thaliana (Mouse-ear cress).